The chain runs to 243 residues: NAD-dependent protein deacetylase (243 aa).

A Deacetylase sirtuin-type domain is found at 1–243 (MKHDLETLKH…VSVVKSLMTE (243 aa)). The NAD(+) site is built by Ala24, Phe35, Arg36, Gln105, Ile107, Asp108, and His123. Phe35 contacts nicotinamide. Residues Ile107 and Asp108 each contribute to the nicotinamide site. His123 serves as the catalytic Proton acceptor. Residues Cys131, Cys134, Cys151, and Cys154 each contribute to the Zn(2+) site. Positions 192, 193, 215, and 232 each coordinate NAD(+).

The protein belongs to the sirtuin family. Class U subfamily. Zn(2+) serves as cofactor.

The protein localises to the cytoplasm. The enzyme catalyses N(6)-acetyl-L-lysyl-[protein] + NAD(+) + H2O = 2''-O-acetyl-ADP-D-ribose + nicotinamide + L-lysyl-[protein]. NAD-dependent protein deacetylase which modulates the activities of several enzymes which are inactive in their acetylated form. This chain is NAD-dependent protein deacetylase, found in Staphylococcus aureus (strain COL).